Consider the following 408-residue polypeptide: Putative UPF0496 protein 2 (408 aa).

The next 2 membrane-spanning stretches (helical) occupy residues 224 to 244 (RIAR…AIVA) and 252 to 272 (ALVG…GAAR). A disordered region spans residues 385–408 (MARGLPPPSPATVTTTSEERLTSS).

The protein belongs to the UPF0496 family.

Its subcellular location is the membrane. The sequence is that of Putative UPF0496 protein 2 from Oryza sativa subsp. japonica (Rice).